We begin with the raw amino-acid sequence, 613 residues long: Cilia- and flagella-associated protein 100 (613 aa).

The tract at residues 36 to 55 is disordered; it reads KSKESKKNKGNVTISDRSSN. The span at 45–55 shows a compositional bias: polar residues; it reads GNVTISDRSSN. 4 coiled-coil regions span residues 167–198, 233–260, 396–435, and 504–580; these read ALAM…FLEK, VEIR…KHYK, FTKL…DKEV, and GTVQ…RGRK.

It belongs to the CFAP100 family.

It is found in the cytoplasm. The protein resides in the cytoskeleton. Its subcellular location is the cilium axoneme. May play a role in ciliary/flagellar motility by regulating the assembly and the activity of axonemal inner dynein arm. The chain is Cilia- and flagella-associated protein 100 from Mus musculus (Mouse).